The sequence spans 69 residues: DNA gyrase inhibitor YacG (69 aa).

Residues 1–15 (MSDEPEHTAKVEPLR) are compositionally biased toward basic and acidic residues. The tract at residues 1 to 22 (MSDEPEHTAKVEPLRKPLPCPE) is disordered. The Zn(2+) site is built by Cys20, Cys23, Cys35, and Cys39.

It belongs to the DNA gyrase inhibitor YacG family. Interacts with GyrB. Requires Zn(2+) as cofactor.

Functionally, inhibits all the catalytic activities of DNA gyrase by preventing its interaction with DNA. Acts by binding directly to the C-terminal domain of GyrB, which probably disrupts DNA binding by the gyrase. This chain is DNA gyrase inhibitor YacG, found in Allorhizobium ampelinum (strain ATCC BAA-846 / DSM 112012 / S4) (Agrobacterium vitis (strain S4)).